Here is a 113-residue protein sequence, read N- to C-terminus: Protein suex-1 (113 aa).

Positions 1 to 22 (MQSLLVFCLATIILSNFTEASA) are cleaved as a signal peptide.

This chain is Protein suex-1, found in Caenorhabditis elegans.